The primary structure comprises 323 residues: tRNA U34 carboxymethyltransferase (323 aa).

Carboxy-S-adenosyl-L-methionine-binding positions include lysine 91, tryptophan 105, lysine 110, glycine 130, 181-182 (IE), methionine 196, tyrosine 200, and arginine 315.

It belongs to the class I-like SAM-binding methyltransferase superfamily. CmoB family. In terms of assembly, homotetramer.

It carries out the reaction carboxy-S-adenosyl-L-methionine + 5-hydroxyuridine(34) in tRNA = 5-carboxymethoxyuridine(34) in tRNA + S-adenosyl-L-homocysteine + H(+). Functionally, catalyzes carboxymethyl transfer from carboxy-S-adenosyl-L-methionine (Cx-SAM) to 5-hydroxyuridine (ho5U) to form 5-carboxymethoxyuridine (cmo5U) at position 34 in tRNAs. The chain is tRNA U34 carboxymethyltransferase from Yersinia pseudotuberculosis serotype O:1b (strain IP 31758).